Consider the following 1017-residue polypeptide: Voltage-gated delayed rectifier potassium channel KCNH4 (1017 aa).

Residues 1–228 (MPVMKGLLAP…LLHYSVSKAI (228 aa)) are Cytoplasmic-facing. The 77-residue stretch at 14 to 90 (FLDTIATRFD…QRLHKALEGH (77 aa)) folds into the PAS domain. The PAC domain maps to 93–145 (HRAEICFYRKDGSAFWCLLDMMPIKNEMGEVVLFLFSFKDITQSGSPGLGPQG). Positions 138–157 (SPGLGPQGGRGDSNHENSLG) are disordered. The segment covering 139–148 (PGLGPQGGRG) has biased composition (gly residues). The helical transmembrane segment at 229-249 (WDGLILLATFYVAVTVPYNVC) threads the bilayer. Over 250-259 (FSGDDDTPIT) the chain is Extracellular. The chain crosses the membrane as a helical span at residues 260–280 (SRHTLVSDIAVEMLFILDIIL). Residues 281 to 302 (NFRTTYVSQSGQVISAPRSIGL) lie on the Cytoplasmic side of the membrane. Residues 303 to 323 (HYLATWFFIDLIAALPFDLLY) traverse the membrane as a helical segment. Over 324–332 (IFNITVTSL) the chain is Extracellular. A glycan (N-linked (GlcNAc...) asparagine) is linked at Asn-326. Residues 333-353 (VHLLKTVRLLRLLRLLQKLER) form a helical; Voltage-sensor membrane-spanning segment. Over 354-361 (YSQCSAVV) the chain is Cytoplasmic. Residues 362–382 (LTLLMSVFALLAHWMACIWYV) form a helical membrane-spanning segment. The Extracellular segment spans residues 383 to 427 (IGRREMEANDPLLWDIGWLHELGKRLEVPYVNGSVGGPSRRSAYI). A glycan (N-linked (GlcNAc...) asparagine) is linked at Asn-414. Residues 428–448 (AALYFTLSSLTSVGFGNVCAN) constitute an intramembrane region (pore-forming). Positions 439–444 (SVGFGN) match the Selectivity filter motif. At 449 to 482 (TDAEKIFSICTMLIGALMHAVVFGNVTAIIQRMY) the chain is on the extracellular side. The N-linked (GlcNAc...) asparagine glycan is linked to Asn-473. A helical transmembrane segment spans residues 483-503 (SRRSLYHSRMKDLKDFIRVHR). Over 504–1017 (LPRPLKQRML…SFQSRSDTFH (514 aa)) the chain is Cytoplasmic. Positions 556–620 (LFGAASRGCL…AILGKGDLIG (65 aa)) are cNMP-binding domain. A compositionally biased stretch (polar residues) spans 691-724 (GSDTSGLSRFSRSPRLSQPRSESLGSSSDKTLPS). Disordered stretches follow at residues 691–749 (GSDT…LPNL), 772–803 (LVSS…RCSA), 821–875 (PDLS…EAEE), and 971–1017 (LLDL…DTFH). A compositionally biased stretch (low complexity) spans 772–787 (LVSSPSLSPSLSPALA). Over residues 978–1002 (ILPPYPSEPDPLGPSPVPEASPPTP) the composition is skewed to pro residues. The span at 1008–1017 (SFQSRSDTFH) shows a compositional bias: polar residues.

Belongs to the potassium channel family. H (Eag) (TC 1.A.1.20) subfamily. Kv12.3/KCNH4 sub-subfamily. As to quaternary structure, the potassium channel is probably composed of a homo- or heterotetrameric complex of pore-forming alpha subunits that can associate with modulating beta subunits. In terms of tissue distribution, detected only in brain, in particular in the telencephalon. Detected in putamen and caudate nucleus, and at lower levels in cerebral cortex, occipital and hippocampus.

It is found in the membrane. The enzyme catalyses K(+)(in) = K(+)(out). Its function is as follows. Pore-forming (alpha) subunit of a voltage-gated delayed rectifier. Activates at more negative voltages, exhibits fast prepulse-independent activation kinetics and deactivates much more slowly, but shows no inactivation. The sequence is that of Voltage-gated delayed rectifier potassium channel KCNH4 from Homo sapiens (Human).